Here is a 384-residue protein sequence, read N- to C-terminus: N-acetyldiaminopimelate deacetylase (384 aa).

The active site involves Asp75. Glu134 acts as the Proton acceptor in catalysis.

The protein belongs to the peptidase M20A family. N-acetyldiaminopimelate deacetylase subfamily.

It catalyses the reaction N-acetyl-(2S,6S)-2,6-diaminopimelate + H2O = (2S,6S)-2,6-diaminopimelate + acetate. It functions in the pathway amino-acid biosynthesis; L-lysine biosynthesis via DAP pathway; LL-2,6-diaminopimelate from (S)-tetrahydrodipicolinate (acetylase route): step 3/3. Functionally, catalyzes the conversion of N-acetyl-diaminopimelate to diaminopimelate and acetate. This chain is N-acetyldiaminopimelate deacetylase, found in Lactobacillus helveticus (strain DPC 4571).